Reading from the N-terminus, the 990-residue chain is DNA ligase 4 (990 aa).

The tract at residues 57-84 (TQKKGRQPPGPRRKAGPHGHSNLSPHEA) is disordered. Residues glutamate 324, lysine 326, leucine 327, arginine 331, glutamate 394, phenylalanine 436, glutamate 496, lysine 501, lysine 518, and lysine 520 each coordinate ATP. Lysine 326 serves as the catalytic N6-AMP-lysine intermediate. Residue glutamate 394 coordinates Mg(2+). Glutamate 496 contacts Mg(2+). 2 BRCT domains span residues 728–821 (PQSK…LPYL) and 900–989 (YMFS…RYQW).

It belongs to the ATP-dependent DNA ligase family. Mg(2+) serves as cofactor.

Its subcellular location is the nucleus. The enzyme catalyses ATP + (deoxyribonucleotide)n-3'-hydroxyl + 5'-phospho-(deoxyribonucleotide)m = (deoxyribonucleotide)n+m + AMP + diphosphate.. Its function is as follows. DNA ligase involved in DNA non-homologous end joining (NHEJ); required for double-strand break (DSB) repair. The polypeptide is DNA ligase 4 (LIG4) (Phaeosphaeria nodorum (strain SN15 / ATCC MYA-4574 / FGSC 10173) (Glume blotch fungus)).